Consider the following 283-residue polypeptide: N-terminal Xaa-Pro-Lys N-methyltransferase 2 (283 aa).

S-adenosyl-L-methionine contacts are provided by residues Gly-124, Arg-129, Asp-146, 174 to 175 (LQ), and Gln-190.

It belongs to the methyltransferase superfamily. NTM1 family.

Its subcellular location is the nucleus. The catalysed reaction is N-terminal L-alanyl-L-prolyl-L-lysyl-[protein] + S-adenosyl-L-methionine = N-terminal N-methyl-L-alanyl-L-prolyl-L-lysyl-[protein] + S-adenosyl-L-homocysteine + H(+). It catalyses the reaction N-terminal L-prolyl-L-prolyl-L-lysyl-[protein] + S-adenosyl-L-methionine = N-terminal N-methyl-L-prolyl-L-prolyl-L-lysyl-[protein] + S-adenosyl-L-homocysteine + H(+). It carries out the reaction N-terminal L-seryl-L-prolyl-L-lysyl-[protein] + S-adenosyl-L-methionine = N-terminal N-methyl-L-seryl-L-prolyl-L-lysyl-[protein] + S-adenosyl-L-homocysteine + H(+). Functionally, alpha N-methyltransferase that methylates the N-terminus of target proteins containing the N-terminal motif [Ala/Pro/Ser]-Pro-Lys when the initiator Met is cleaved. Specifically catalyzes monomethylation of exposed alpha-amino group of Ala or Ser residue in the [Ala/Ser]-Pro-Lys motif and Pro in the Pro-Pro-Lys motif. Predominantly functions as a mono-methyltransferase but is also able to di-/tri-methylate the GPKRIA peptide and di-methylate the PPKRIA peptide (in vitro). May activate NTMT1 by priming its substrates for trimethylation. The protein is N-terminal Xaa-Pro-Lys N-methyltransferase 2 (Ntmt2) of Mus musculus (Mouse).